The primary structure comprises 307 residues: D-alanine--D-alanine ligase (307 aa).

Positions 105 to 304 (KMLWKGFGLP…FEKLVEKILE (200 aa)) constitute an ATP-grasp domain. 135–190 (VARLGLPLMVKPSREGSSVGLTKVDSADKLKSAVDLALKFDDIVLIEEWLSGDELT) contributes to the ATP binding site. 3 residues coordinate Mg(2+): aspartate 258, glutamate 271, and asparagine 273.

Belongs to the D-alanine--D-alanine ligase family. The cofactor is Mg(2+). Mn(2+) serves as cofactor.

Its subcellular location is the cytoplasm. The enzyme catalyses 2 D-alanine + ATP = D-alanyl-D-alanine + ADP + phosphate + H(+). It participates in cell wall biogenesis; peptidoglycan biosynthesis. Cell wall formation. The chain is D-alanine--D-alanine ligase from Actinobacillus succinogenes (strain ATCC 55618 / DSM 22257 / CCUG 43843 / 130Z).